Reading from the N-terminus, the 68-residue chain is Large ribosomal subunit protein bL31 (68 aa).

Cys-16, Cys-18, Cys-36, and Cys-39 together coordinate Zn(2+).

It belongs to the bacterial ribosomal protein bL31 family. Type A subfamily. As to quaternary structure, part of the 50S ribosomal subunit. The cofactor is Zn(2+).

Its function is as follows. Binds the 23S rRNA. This is Large ribosomal subunit protein bL31 from Dictyoglomus thermophilum (strain ATCC 35947 / DSM 3960 / H-6-12).